The chain runs to 325 residues: D site-binding protein (325 aa).

3 disordered regions span residues 1-98 (MARP…AGPS), 124-203 (LEHG…EVLM), and 230-256 (FSEEELKPQPIMKKARKVQVPEEQKDE). The span at 17-28 (GPAGAPPGGGAL) shows a compositional bias: gly residues. Residues 71–80 (AGPADAPSGA) show a composition bias toward low complexity. Serine 86 bears the Phosphoserine mark. The segment covering 88–98 (RGRSGPVAGPS) has biased composition (low complexity). Residues 129–153 (PPSPPPPGGLSPAPSPARTPAPSPG) are compositionally biased toward pro residues. A compositionally biased stretch (low complexity) spans 154 to 171 (PGSCSSSSPRSSPGHAPA). The 64-residue stretch at 255-318 (DEKYWSRRYK…SHYRAVLSRY (64 aa)) folds into the bZIP domain. Residues 257–279 (KYWSRRYKNNEAAKRSRDARRLK) form a basic motif region. The interval 283-297 (ISVRAAFLEKENALL) is leucine-zipper.

It belongs to the bZIP family. PAR subfamily. In terms of assembly, binds DNA as a homodimer or a heterodimer. Can form a heterodimer with TEF. As to expression, expressed in the suprachiasmatic nuclei (SCN) and in most peripheral tissues, with a strong circadian rhythmicity.

The protein resides in the nucleus. Its function is as follows. This transcriptional activator recognizes and binds to the sequence 5'-RTTAYGTAAY-3' found in the promoter of genes such as albumin, CYP2A4 and CYP2A5. It is not essential for circadian rhythm generation, but modulates important clock output genes. May be a direct target for regulation by the circadian pacemaker component clock. May affect circadian period and sleep regulation. The protein is D site-binding protein (Dbp) of Mus musculus (Mouse).